A 393-amino-acid polypeptide reads, in one-letter code: MNISTTRKDFMIVNMGPHHPSMHGVLRLIVTLDGEDVIDCEPILGYLHRGMEKIAENRTIIQYLPYVTRWDYLATMFTEAITVNGPEQLGNIQVPKRASYIRVIMLELSRIASHLLWLGPFMADIGAQTPFFYIFRERELIYDLFEAATGMRMMHNFFRIGGVATDLPYGWVDKCYDFCDYFLTRIVEYQKLITRNPIFLERVEGVGVVDIKEVINWGLSGPMLRASGIQWDLRKVDNYECYEEFDWEVQWQKEGDSLARYLVRIGEMMESIKIIQQALEGIPGGPYENLEIRCFDREKEPEWNEFEYRFISKKPSPTFELPKQELYVRIEAPKGELGIFLIGDQNGFPWRWKIRPPGFINLQILPQLVKRMKLADIMTILGSIDIIMGEVDR.

It belongs to the complex I 49 kDa subunit family. As to quaternary structure, NDH is composed of at least 16 different subunits, 5 of which are encoded in the nucleus.

The protein localises to the plastid. It localises to the chloroplast thylakoid membrane. The catalysed reaction is a plastoquinone + NADH + (n+1) H(+)(in) = a plastoquinol + NAD(+) + n H(+)(out). It catalyses the reaction a plastoquinone + NADPH + (n+1) H(+)(in) = a plastoquinol + NADP(+) + n H(+)(out). In terms of biological role, NDH shuttles electrons from NAD(P)H:plastoquinone, via FMN and iron-sulfur (Fe-S) centers, to quinones in the photosynthetic chain and possibly in a chloroplast respiratory chain. The immediate electron acceptor for the enzyme in this species is believed to be plastoquinone. Couples the redox reaction to proton translocation, and thus conserves the redox energy in a proton gradient. The polypeptide is NAD(P)H-quinone oxidoreductase subunit H, chloroplastic (Glycine max (Soybean)).